The sequence spans 837 residues: Zinc fingers and homeoboxes protein 2 (837 aa).

The tract at residues 27–77 is interaction with EFNB1; sequence VDRAKEKGIGTPQPDVAKDSWAAELENSSKENEVIEVKSMGESQSKKLQGG. Thr37 is modified (phosphothreonine). A Glycyl lysine isopeptide (Lys-Gly) (interchain with G-Cter in SUMO2) cross-link involves residue Lys64. C2H2-type zinc fingers lie at residues 78-101 and 110-133; these read YECK…DMQH and YVCA…SKFH. A compositionally biased stretch (low complexity) spans 164–180; it reads SITTSGPGTGDSDSGIS. Positions 164-204 are disordered; the sequence is SITTSGPGTGDSDSGISVSKTPIMKPGKPKADAKKVPKKPE. Over residues 192–204 the composition is skewed to basic and acidic residues; the sequence is PKADAKKVPKKPE. The required for homodimerization stretch occupies residues 195-358; it reads DAKKVPKKPE…PAQLAPTKVT (164 aa). A Phosphothreonine modification is found at Thr207. 4 DNA-binding regions (homeobox) span residues 263-324, 439-501, 530-591, and 628-690; these read NTTK…WSPE, TPAS…IVHI, PQKF…EQAV, and SPSP…TVKW. The required for repressor activity stretch occupies residues 263–446; the sequence is NTTKYNSALD…PLTPASDRKK (184 aa). The tract at residues 263 to 497 is required for interaction with NFYA; the sequence is NTTKYNSALD…SDHRYRCQRG (235 aa). Positions 317–446 are required for nuclear localization; it reads HGISWSPEEV…PLTPASDRKK (130 aa). The segment at 404–445 is disordered; it reads GQKRPLVTPQAAPEPKRPHIAQVPEPPPKVANPPLTPASDRK. A compositionally biased stretch (pro residues) spans 427–439; the sequence is PEPPPKVANPPLT. Lys455 is covalently cross-linked (Glycyl lysine isopeptide (Lys-Gly) (interchain with G-Cter in SUMO2)). The disordered stretch occupies residues 755-837; sequence PAKDCLPAKP…DCVPAEAGQA (83 aa). Phosphoserine occurs at positions 825 and 827.

The protein belongs to the ZHX family. As to quaternary structure, homodimer (via homeobox domain). Heterodimer with ZHX1 (via homeobox domain 1). Heterodimer with ZHX3 (via homeobox domain 1). Heterodimerization with ZHX1 is not necessary for repressor activity. Interacts (via homeobox domain) with NFYA (via N-terminus). Interacts with EFNB1 intracellular domain peptide; the interaction enhances ZHX2 transcriptional repression activity. In terms of tissue distribution, ubiquitously expressed. Expressed in podocytes.

It is found in the nucleus. In terms of biological role, acts as a transcriptional repressor. Represses the promoter activity of the CDC25C gene stimulated by NFYA. May play a role in retinal development where it regulates the composition of bipolar cell populations, by promoting differentiation of bipolar OFF-type cells. In the brain, may promote maintenance and suppress differentiation of neural progenitor cells in the developing cortex. This is Zinc fingers and homeoboxes protein 2 (ZHX2) from Homo sapiens (Human).